A 183-amino-acid chain; its full sequence is Holliday junction branch migration complex subunit RuvA (183 aa).

The interval 1-63 (MTVGLIGVVE…EDAHLLYGFL (63 aa)) is domain I. The tract at residues 64–141 (EESEKILFER…IQDETKPVHN (78 aa)) is domain II. A region of interest (flexible linker) is located at residue Asn-141. The tract at residues 141–183 (NEAFLALESLGFKSAEINPILKKLKPNLSVEEAIKEALQQLRS) is domain III.

This sequence belongs to the RuvA family. Homotetramer. Forms an RuvA(8)-RuvB(12)-Holliday junction (HJ) complex. HJ DNA is sandwiched between 2 RuvA tetramers; dsDNA enters through RuvA and exits via RuvB. An RuvB hexamer assembles on each DNA strand where it exits the tetramer. Each RuvB hexamer is contacted by two RuvA subunits (via domain III) on 2 adjacent RuvB subunits; this complex drives branch migration. In the full resolvosome a probable DNA-RuvA(4)-RuvB(12)-RuvC(2) complex forms which resolves the HJ.

It localises to the cytoplasm. Functionally, the RuvA-RuvB-RuvC complex processes Holliday junction (HJ) DNA during genetic recombination and DNA repair, while the RuvA-RuvB complex plays an important role in the rescue of blocked DNA replication forks via replication fork reversal (RFR). RuvA specifically binds to HJ cruciform DNA, conferring on it an open structure. The RuvB hexamer acts as an ATP-dependent pump, pulling dsDNA into and through the RuvAB complex. HJ branch migration allows RuvC to scan DNA until it finds its consensus sequence, where it cleaves and resolves the cruciform DNA. The sequence is that of Holliday junction branch migration complex subunit RuvA from Helicobacter acinonychis (strain Sheeba).